The sequence spans 244 residues: uncharacterized protein (244 aa).

Positions 1–19 (MRGIFFLILILNFIGLIFS) are cleaved as a signal peptide. N-linked (GlcNAc...) asparagine glycans are attached at residues asparagine 45 and asparagine 77. 2 ShKT domains span residues 67 to 105 (CNNP…CGKC) and 113 to 149 (CSDK…CNRC). Disulfide bonds link cysteine 113-cysteine 149, cysteine 122-cysteine 142, and cysteine 129-cysteine 146. 2 N-linked (GlcNAc...) asparagine glycosylation sites follow: asparagine 152 and asparagine 158. ShKT domains lie at 171–205 (CTDL…CNAC) and 208–243 (CEDA…CNIC). 6 disulfides stabilise this stretch: cysteine 171–cysteine 205, cysteine 178–cysteine 198, cysteine 185–cysteine 202, cysteine 208–cysteine 243, cysteine 215–cysteine 236, and cysteine 224–cysteine 240.

This is an uncharacterized protein from Caenorhabditis elegans.